The sequence spans 567 residues: Glutathione/L-cysteine transport system ATP-binding/permease protein CydC (567 aa).

A run of 6 helical transmembrane segments spans residues 14–34 (ILTL…MQAE), 44–64 (FNGK…IAFI), 130–150 (FLPK…YVFF), 156–176 (AIIL…LGLV), 240–260 (SFAL…FLGL), and 266–286 (DILL…FLPV). The 282-residue stretch at 17–298 (LITCLTLIQT…VGNDYHATLN (282 aa)) folds into the ABC transmembrane type-1 domain. The ABC transporter domain maps to 321–561 (LQLEAWSDQD…NGVYTKLVKA (241 aa)). Residue 360 to 367 (GASGAGKS) participates in ATP binding.

The protein belongs to the ABC transporter superfamily. Cysteine exporter (TC 3.A.1.129.1) family. Forms a heterodimer with CydD.

It is found in the cell membrane. The catalysed reaction is L-cysteine(in) + ATP + H2O = L-cysteine(out) + ADP + phosphate + H(+). The enzyme catalyses glutathione(in) + ATP + H2O = glutathione(out) + ADP + phosphate + H(+). In terms of biological role, part of the ABC transporter complex CydDC that exports the reduced low-molecular-weight thiols cysteine and glutathione from the cell. Export of these thiol-containing redox-active molecules may be crucial for redox homeostasis, permitting correct assembly of various respiratory complexes and formation of correct disulfide bonds in secreted proteins. CydC contains transmembrane domains (TMD), which form a pore in the membrane, and an ATP-binding domain (NBD), which is responsible for energy generation. This Bacillus subtilis (strain 168) protein is Glutathione/L-cysteine transport system ATP-binding/permease protein CydC (cydC).